Here is a 224-residue protein sequence, read N- to C-terminus: uncharacterized protein (224 aa).

It is found in the virion. This is an uncharacterized protein from Acanthamoeba polyphaga mimivirus (APMV).